Reading from the N-terminus, the 122-residue chain is FMN-binding protein (122 aa).

In terms of assembly, monomer and homodimer. FMN is required as a cofactor.

The protein resides in the cytoplasm. Functions as a redox protein with a potential of -325 mV. The chain is FMN-binding protein from Nitratidesulfovibrio vulgaris (strain DSM 19637 / Miyazaki F) (Desulfovibrio vulgaris).